Here is a 384-residue protein sequence, read N- to C-terminus: Beta-glucuronosyltransferase GlcAT14C (384 aa).

The Cytoplasmic portion of the chain corresponds to 1 to 11; it reads MKRSHISSPRS. Residues 12-34 form a signal-anchor for type II membrane protein membrane-spanning segment; sequence YSRPAISIFGVFLLFLLVLTLSS. Residues 35-384 are Lumenal-facing; sequence RKPSDSSSGL…HENFRAKQCK (350 aa). N-linked (GlcNAc...) asparagine glycans are attached at residues N156, N285, and N306.

This sequence belongs to the glycosyltransferase 14 family.

Its subcellular location is the golgi apparatus membrane. Functionally, beta-glucuronosyltransferase involved in the biosynthesis of type II arabinogalactan (AG). Modifies both the beta-1,6-linked galactan and beta-1,3-linked galactan present in type II AG. The chain is Beta-glucuronosyltransferase GlcAT14C from Arabidopsis thaliana (Mouse-ear cress).